The chain runs to 534 residues: Protein tweety homolog 2 (534 aa).

At 1 to 44 the chain is on the extracellular side; sequence MQAARVDYIAPWWVVWLHSVPHVGLRLQPVNSTFSPGDESYQES. Residue Asn31 is glycosylated (N-linked (GlcNAc...) asparagine). A helical transmembrane segment spans residues 45–65; it reads LLFLGLVAAVCLGLNLIFLVA. Residues 66 to 87 are Cytoplasmic-facing; it reads YLVCACHCRRDDAVQTKQHHSC. A helical membrane pass occupies residues 88–108; it reads CITWTAVVAGLICCAAVGVGF. Topologically, residues 109–213 are extracellular; that stretch reads YGNSETNDGA…QTGYVEYYRW (105 aa). Positions 113 and 116 each coordinate Ca(2+). Residue Asn129 is glycosylated (N-linked (GlcNAc) asparagine). Positions 164-166 match the RGD motif; the sequence is RGD. Phosphothreonine is present on Thr199. Residues 214 to 234 traverse the membrane as a helical segment; that stretch reads LSYLLLFILDLVICLIACLGL. Topologically, residues 235 to 240 are cytoplasmic; sequence AKRSKC. The chain crosses the membrane as a helical span at residues 241 to 261; sequence LLASMLCCGALSLLLSWASLA. Over 262 to 388 the chain is Extracellular; it reads ADGSAAVATS…AGICYDGLQG (127 aa). 2 cysteine pairs are disulfide-bonded: Cys274-Cys382 and Cys300-Cys367. Asn283 carries N-linked (GlcNAc...) asparagine glycosylation. N-linked (GlcNAc) asparagine glycosylation is present at Asn352. The chain crosses the membrane as a helical span at residues 389-409; that stretch reads LLYLGLFSFLAALAFSTMICA. Topologically, residues 410-534 are cytoplasmic; the sequence is GPRAWKHFTT…LRHYGNQFPA (125 aa). Ser504 is subject to Phosphoserine. A PY-motif; mediates interaction with NEDD4L motif is present at residues 506–509; that stretch reads PPTY.

This sequence belongs to the tweety family. As to quaternary structure, homodimer. Forms cis-homodimers in the presence of Ca(+2) and forms monomers and trans-dimers in the absence of Ca(2+). Interacts with NEDD4L. In terms of processing, N- Glycosylated. Contains high-mannose, hybrid and complex oligosaccharides. Post-translationally, ubiquitinated by NEDD4L, leading to its proteasomal degradation. In terms of tissue distribution, expressed at higher level in brain and testis and at lower levels in heart, ovary, spleen and peripheral blood leukocytes. Up-regulated in 13 of 16 renal cell carcinoma samples examined. Up-regulated in colon carcinoma.

It localises to the cell membrane. It carries out the reaction chloride(in) = chloride(out). It catalyses the reaction L-glutamate(out) = L-glutamate(in). In terms of biological role, calcium-independent, swelling-dependent volume-regulated anion channel (VRAC-swell) which plays a pivotal role in the process of regulatory volume decrease (RVD) in the brain through the efflux of anions like chloride and organic osmolytes like glutamate. Probable large-conductance Ca(2+)-activated chloride channel. The protein is Protein tweety homolog 2 (TTYH2) of Homo sapiens (Human).